The chain runs to 63 residues: uncharacterized protein (63 aa).

A helical transmembrane segment spans residues 37 to 57 (IFFPTTFDVLLLAILIFLACA).

The protein localises to the cell membrane. This is an uncharacterized protein from Bacillus subtilis (strain 168).